An 846-amino-acid polypeptide reads, in one-letter code: DNA mismatch repair protein MutS (846 aa).

610-617 (GPNMGGKS) provides a ligand contact to ATP.

This sequence belongs to the DNA mismatch repair MutS family.

Functionally, this protein is involved in the repair of mismatches in DNA. It is possible that it carries out the mismatch recognition step. This protein has a weak ATPase activity. The sequence is that of DNA mismatch repair protein MutS from Legionella pneumophila (strain Paris).